The chain runs to 172 residues: Protein-export protein SecB (172 aa).

The protein belongs to the SecB family. As to quaternary structure, homotetramer, a dimer of dimers. One homotetramer interacts with 1 SecA dimer.

The protein resides in the cytoplasm. One of the proteins required for the normal export of preproteins out of the cell cytoplasm. It is a molecular chaperone that binds to a subset of precursor proteins, maintaining them in a translocation-competent state. It also specifically binds to its receptor SecA. The polypeptide is Protein-export protein SecB (Bordetella avium (strain 197N)).